The sequence spans 569 residues: Lysine--tRNA ligase (569 aa).

Positions 414 and 421 each coordinate Mg(2+).

It belongs to the class-II aminoacyl-tRNA synthetase family. In terms of assembly, homodimer. Mg(2+) is required as a cofactor.

The protein resides in the cytoplasm. The enzyme catalyses tRNA(Lys) + L-lysine + ATP = L-lysyl-tRNA(Lys) + AMP + diphosphate. This Christiangramia forsetii (strain DSM 17595 / CGMCC 1.15422 / KT0803) (Gramella forsetii) protein is Lysine--tRNA ligase.